We begin with the raw amino-acid sequence, 343 residues long: Proto-oncogene serine/threonine-protein kinase mos (343 aa).

The region spanning 63 to 339 (VCLMHRLGSG…LLQRDLKAFR (277 aa)) is the Protein kinase domain. ATP-binding positions include 69 to 77 (LGSGGFGSV) and K90. Residue D198 is the Proton acceptor of the active site.

This sequence belongs to the protein kinase superfamily. Ser/Thr protein kinase family. As to quaternary structure, interacts with MAP2K1/MEK1.

It localises to the cytoplasm. It carries out the reaction L-seryl-[protein] + ATP = O-phospho-L-seryl-[protein] + ADP + H(+). The catalysed reaction is L-threonyl-[protein] + ATP = O-phospho-L-threonyl-[protein] + ADP + H(+). Functionally, serine/threonine kinase involved in the regulation of MAPK signaling. Is an activator of the ERK1/2 signaling cascade playing an essential role in the stimulation of oocyte maturation. In Mus musculus (Mouse), this protein is Proto-oncogene serine/threonine-protein kinase mos.